Consider the following 567-residue polypeptide: uncharacterized protein (567 aa).

The protein belongs to the protein kinase superfamily. ADCK protein kinase family.

This is an uncharacterized protein from Synechocystis sp. (strain ATCC 27184 / PCC 6803 / Kazusa).